Here is a 307-residue protein sequence, read N- to C-terminus: Acetyl-coenzyme A carboxylase carboxyl transferase subunit beta (307 aa).

A disordered region spans residues 1-26; it reads MAMAEPQDPKKGDKKTAERRGGGWLS. Over residues 7-21 the composition is skewed to basic and acidic residues; that stretch reads QDPKKGDKKTAERRG. A CoA carboxyltransferase N-terminal domain is found at 45 to 307; the sequence is LWVKCPDTGE…LMMGRKRQAA (263 aa).

This sequence belongs to the AccD/PCCB family. As to quaternary structure, acetyl-CoA carboxylase is a heterohexamer composed of biotin carboxyl carrier protein (AccB), biotin carboxylase (AccC) and two subunits each of ACCase subunit alpha (AccA) and ACCase subunit beta (AccD).

The protein localises to the cytoplasm. The catalysed reaction is N(6)-carboxybiotinyl-L-lysyl-[protein] + acetyl-CoA = N(6)-biotinyl-L-lysyl-[protein] + malonyl-CoA. It participates in lipid metabolism; malonyl-CoA biosynthesis; malonyl-CoA from acetyl-CoA: step 1/1. In terms of biological role, component of the acetyl coenzyme A carboxylase (ACC) complex. Biotin carboxylase (BC) catalyzes the carboxylation of biotin on its carrier protein (BCCP) and then the CO(2) group is transferred by the transcarboxylase to acetyl-CoA to form malonyl-CoA. In Caulobacter vibrioides (strain ATCC 19089 / CIP 103742 / CB 15) (Caulobacter crescentus), this protein is Acetyl-coenzyme A carboxylase carboxyl transferase subunit beta.